The chain runs to 407 residues: Tryptophan synthase beta chain (407 aa).

K91 bears the N6-(pyridoxal phosphate)lysine mark.

This sequence belongs to the TrpB family. Tetramer of two alpha and two beta chains. It depends on pyridoxal 5'-phosphate as a cofactor.

The catalysed reaction is (1S,2R)-1-C-(indol-3-yl)glycerol 3-phosphate + L-serine = D-glyceraldehyde 3-phosphate + L-tryptophan + H2O. Its pathway is amino-acid biosynthesis; L-tryptophan biosynthesis; L-tryptophan from chorismate: step 5/5. Its function is as follows. The beta subunit is responsible for the synthesis of L-tryptophan from indole and L-serine. In Streptococcus pneumoniae (strain JJA), this protein is Tryptophan synthase beta chain.